The sequence spans 191 residues: Cytochrome c oxidase assembly protein CtaG (191 aa).

The Cytoplasmic segment spans residues 1–9; sequence MALNGPQKT. A helical; Signal-anchor for type II membrane protein transmembrane segment spans residues 10–30; sequence VVQLVSVVVVMGGLAWASVPF. Residues 31–191 are Periplasmic-facing; sequence YDWFCRVTGF…LDAGEKTNTN (161 aa).

The protein belongs to the COX11/CtaG family.

It localises to the cell inner membrane. In terms of biological role, exerts its effect at some terminal stage of cytochrome c oxidase synthesis, probably by being involved in the insertion of the copper B into subunit I. In Ruegeria pomeroyi (strain ATCC 700808 / DSM 15171 / DSS-3) (Silicibacter pomeroyi), this protein is Cytochrome c oxidase assembly protein CtaG.